Here is a 78-residue protein sequence, read N- to C-terminus: D-alanyl carrier protein (78 aa).

In terms of domain architecture, Carrier spans 1–78 (MEFKQEVLDV…NIVNKLTELK (78 aa)). S36 is subject to O-(pantetheine 4'-phosphoryl)serine.

Belongs to the DltC family. 4'-phosphopantetheine is transferred from CoA to a specific serine of apo-DCP.

It is found in the cytoplasm. Its pathway is cell wall biogenesis; lipoteichoic acid biosynthesis. In terms of biological role, carrier protein involved in the D-alanylation of lipoteichoic acid (LTA). The loading of thioester-linked D-alanine onto DltC is catalyzed by D-alanine--D-alanyl carrier protein ligase DltA. The DltC-carried D-alanyl group is further transferred to cell membrane phosphatidylglycerol (PG) by forming an ester bond, probably catalyzed by DltD. D-alanylation of LTA plays an important role in modulating the properties of the cell wall in Gram-positive bacteria, influencing the net charge of the cell wall. This chain is D-alanyl carrier protein, found in Bacillus velezensis (strain DSM 23117 / BGSC 10A6 / LMG 26770 / FZB42) (Bacillus amyloliquefaciens subsp. plantarum).